Reading from the N-terminus, the 452-residue chain is MLKYFGTDGVRGVANQGLTPEMAFKLGRDGGYVLTKNKKDGEQAKVLVSRDTRISGQMLEYALISGLLSVGIEVLEVGVITTPGLSYLVRAQGADAGIQISASHNPVEDNGIKFFGSDGLKLSDEMEGEIEKLIDAEEDTLPRPSAEGLGTVTDFHEGSAKYLQFIENTIPEELDGIKVVIDGANGASSALISRLFADCGVDFTTIYTHPNGLNINDHCGATHTENLQKEVVKQGAQLGLAFDGDADRCIAVDENGNEVDGDHIMYVIGSYLAEHGRLKKDTIVTTVMSNLGFTKALEKEDLKNVRTQVGDRYVSEEMRAHGYNLGGEQSGHVIMSDYHNTGDGMLTGLHLMLVMKKTGKSLSELLKDFKDYPQCLVNVPVTDKKSWKEHQPILDVIAEVEKDMAGNGRVLVRPSGTQDLLRVMAEGPTQEETDAYVDRIVKVVEKEMGTNK.

Ser-103 serves as the catalytic Phosphoserine intermediate. Mg(2+) is bound by residues Ser-103, Asp-243, Asp-245, and Asp-247. Phosphoserine is present on Ser-103.

It belongs to the phosphohexose mutase family. Requires Mg(2+) as cofactor. In terms of processing, activated by phosphorylation.

The catalysed reaction is alpha-D-glucosamine 1-phosphate = D-glucosamine 6-phosphate. Its function is as follows. Catalyzes the conversion of glucosamine-6-phosphate to glucosamine-1-phosphate. This Lactobacillus acidophilus (strain ATCC 700396 / NCK56 / N2 / NCFM) protein is Phosphoglucosamine mutase.